Here is a 188-residue protein sequence, read N- to C-terminus: Ribosome-recycling factor (188 aa).

The protein belongs to the RRF family.

It localises to the cytoplasm. Responsible for the release of ribosomes from messenger RNA at the termination of protein biosynthesis. May increase the efficiency of translation by recycling ribosomes from one round of translation to another. This chain is Ribosome-recycling factor, found in Anaeromyxobacter dehalogenans (strain 2CP-C).